The primary structure comprises 1043 residues: MAQESSNMDQSKSDNVTDNKPNRSLISMARPSPQRCHPLDQQSASTSSLPTSRPSSSPGQSPNITPSILTSDTLHLPARSVSPTRPWTPSRGSEWSRHMPLSVSSVNYEPPEINCSPRPGTPSSKYGGSPRRPLRQPVVCWPPASSAGETSIDIADGGDDSEDPFVVGERTVHQRSNTRSSIKLIQFTMQLSPQLLQMKRTPWVKLTLDDGEDDESDFNVHYGPAPTGRQERRGVRKAQMTKKEVRLMNGELVLECKIPRMLHSFLPRRDDREFTHMRYTAVTCDPDDFTVKGFKLRQNIGSTMRETELFVCVTMYNENEIDFTRTMHGIMRNISHFCSRTKSRTWGKDGWQKIVVCIIADGRQKVHPRTLNALAAMGVYQDGIAKNVVNQKPVNAHVYEYTTQVSLDPDLKFKGAEKGIMPCQVIFCMKERNEKKLNSHRWFFNAFGRALNPNICILLDVGTKPEPTALYHLWKAFDQDSNVAGAAGEIKAGKGKGCLGLFNPLVASQNFEYKMSNILDKPLESVFGYITVLPGALSAYRYHALQNDSTGHGPLSMYFKGEMLHGKNADVFTANMYLAEDRILCWELVAKREEQWVLKFVKSAVGETDVPDTVPEFISQRRRWLNGAFFAAVYSLIHFRQIWRTDHTITRKILLHIEFLYQFVSLAFTFFSLANFYLTFYFIAGALSDPTVDPFGHNIGKYIFAILRYTCVLLICLQFVLSMGNRPQGAKKMFLSGMIIYCIIMMYTVFSALYMVVMQLKTSKEMIKDSLSLGNNTFTYIIVSTLSTVGLYFFMSFLYLDPWHMFTSSIQYFALLPSYICRLQIYAFCNTHDVTWGTKGDNVIRTDLGTARITSSSTVELEMPSEQLDIDSGYDESSAISATDSKCPRQSHPRRRCRKTTTAVRTYMVSVWFIANAILAMAVSEAFTEKSVGNNAYLAFVLWSVASLAVFRAVGSTAFAILNVVHRVMEGKMKFAAAGGTGYGYGSYVGSSSGGGGGSSGVRSSGAGSSLGLSSGMGEKVSDWASETGWAVKRTAGKLRFWR.

The span at 1-10 (MAQESSNMDQ) shows a compositional bias: polar residues. Disordered stretches follow at residues 1-133 (MAQE…PRRP) and 215-234 (ESDFNVHYGPAPTGRQERRG). Residues 11–21 (SKSDNVTDNKP) are compositionally biased toward basic and acidic residues. Positions 43-58 (SASTSSLPTSRPSSSP) are enriched in low complexity. Composition is skewed to polar residues over residues 59-73 (GQSPNITPSILTSDT) and 81-93 (VSPTRPWTPSRGS). A run of 6 helical transmembrane segments spans residues 663–683 (FVSLAFTFFSLANFYLTFYFI), 703–723 (IFAILRYTCVLLICLQFVLSM), 738–758 (MIIYCIIMMYTVFSALYMVVM), 780–800 (YIIVSTLSTVGLYFFMSFLYL), 907–927 (YMVSVWFIANAILAMAVSEAF), and 931–951 (SVGNNAYLAFVLWSVASLAVF).

The protein belongs to the chitin synthase family. Class II subfamily.

The protein resides in the cell membrane. It catalyses the reaction [(1-&gt;4)-N-acetyl-beta-D-glucosaminyl](n) + UDP-N-acetyl-alpha-D-glucosamine = [(1-&gt;4)-N-acetyl-beta-D-glucosaminyl](n+1) + UDP + H(+). Its function is as follows. Polymerizes chitin, a structural polymer of the cell wall and septum, by transferring the sugar moiety of UDP-GlcNAc to the non-reducing end of the growing chitin polymer. The chain is Chitin synthase 2 (CHS2) from Paracoccidioides brasiliensis.